The sequence spans 162 residues: uncharacterized protein (162 aa).

A coiled-coil region spans residues 129–161; sequence DLNAVLKNLKEVEKKSLKISKEELKKKLDQILG.

This is an uncharacterized protein from Aquifex aeolicus (strain VF5).